A 530-amino-acid polypeptide reads, in one-letter code: Amidase FVEG_08295 (530 aa).

Residues Lys-138 and Ser-214 each act as charge relay system in the active site. Substrate-binding positions include Ser-214 and 235 to 238 (IAGS). Ser-238 acts as the Acyl-ester intermediate in catalysis.

The protein belongs to the amidase family.

The enzyme catalyses a monocarboxylic acid amide + H2O = a monocarboxylate + NH4(+). Its pathway is xenobiotic degradation. In terms of biological role, amidase; part of the Fusarium detoxification of benzoxazolinone cluster 1 (FDB1) involved in the degradation of benzoxazolinones produced by the host plant. Maize, wheat, and rye produce the 2 benzoxazinone phytoanticipins 2,4-dihy-droxy-7-methoxy-1,4-benzoxazin-3-one (DIMBOA) and 2,4-dihydroxy-1,4-benzoxazin-3-one (DIBOA) that, due to their inherent instability once released, spontaneously degrade to the more stable corresponding benzoxazolinones, 6-methoxy-2-benzoxazolinone (MBOA) and 2-benzoxazolinone (BOA), respectively. The first step in the detoxification of benzoxazolinones involves the hydrolysis of the cyclic ester bond of benzoxazolinones by the FDB1 cluster gamma-lactamase MBL1 to aminophenols. MBL1 is able to convert BOA into 2-aminophenol (2-AP), as well as MBOA into 5-methoxy-2-aminophenol (2-AMP). The FDB2 cluster N-malonyltransferase FDB2/NAT1 then metabolizes aminophenols via N-malonylation to non-toxic malonamic acids. FDB2/NAT1 converts 2-AP into N-(2-hydroxyphenyl) malonamic acid (HPMA) and 2-AMP into N-(2-hydroxy-4-methoxyphenyl) malonamic acid (HMPMA). The duplicated dienlactone hydrolases DLH1 and DLH2 may provide redundant function for hydrolyzing the lactone moiety in the BOA molecule. The roles of the amidases an other enzymes encoded by the 2 FDB clusters have not been identified so far. The sequence is that of Amidase FVEG_08295 from Gibberella moniliformis (strain M3125 / FGSC 7600) (Maize ear and stalk rot fungus).